The following is a 299-amino-acid chain: Oxygen-dependent coproporphyrinogen-III oxidase (299 aa).

Ser92 provides a ligand contact to substrate. The a divalent metal cation site is built by His96 and His106. The Proton donor role is filled by His106. Position 108 to 110 (108 to 110) interacts with substrate; it reads NVR. 2 residues coordinate a divalent metal cation: His145 and His175. The interval 239-274 is important for dimerization; the sequence is YVEFNLVYDRGTLFGLQSGGRAESILMSLPPRVRWE. A substrate-binding site is contributed by 257–259; the sequence is GGR.

Belongs to the aerobic coproporphyrinogen-III oxidase family. Homodimer. A divalent metal cation is required as a cofactor.

It localises to the cytoplasm. The enzyme catalyses coproporphyrinogen III + O2 + 2 H(+) = protoporphyrinogen IX + 2 CO2 + 2 H2O. It functions in the pathway porphyrin-containing compound metabolism; protoporphyrin-IX biosynthesis; protoporphyrinogen-IX from coproporphyrinogen-III (O2 route): step 1/1. Functionally, involved in the heme biosynthesis. Catalyzes the aerobic oxidative decarboxylation of propionate groups of rings A and B of coproporphyrinogen-III to yield the vinyl groups in protoporphyrinogen-IX. This chain is Oxygen-dependent coproporphyrinogen-III oxidase, found in Xanthomonas oryzae pv. oryzae (strain MAFF 311018).